Reading from the N-terminus, the 585-residue chain is Zinc finger protein Eos (585 aa).

Disordered regions lie at residues Met1 to Leu43 and Glu68 to Ser98. Residues Gln25 to Pro34 are compositionally biased toward basic and acidic residues. The span at Ser79 to Ser98 shows a compositional bias: polar residues. Lys100 is covalently cross-linked (Glycyl lysine isopeptide (Lys-Gly) (interchain with G-Cter in SUMO2)). Ser105 carries the post-translational modification Phosphoserine. 4 C2H2-type zinc fingers span residues Leu159–His181, Phe187–His209, Phe215–His237, and Tyr248–His271. Residues Ala281–Gly585 are interaction with FOXP3. Lys335 bears the N6-acetyllysine mark. The tract at residues Pro410 to Arg489 is disordered. The short motif at Pro425–Ala429 is the CTBP-binding motif PEDLA element. The span at Gln475–Thr484 shows a compositional bias: pro residues. Lys500 is covalently cross-linked (Glycyl lysine isopeptide (Lys-Gly) (interchain with G-Cter in SUMO2)). 2 consecutive C2H2-type zinc fingers follow at residues Phe530–His552 and Phe558–His582.

It belongs to the Ikaros C2H2-type zinc-finger protein family. As to quaternary structure, self-associates. Interacts with other family members; IKZF1, IKZF2, IKZF3 and IKZF5. Interacts with CTBP2. Interacts with SPI1, MITF, FOXP3 and CTBP1. As to expression, highly expressed in skeletal muscle, low levels of expression in heart, thymus, kidney, liver, and spleen. Expressed in the hematopoietic cell lines MOLT-4, NALM-6 and K-562. Highly expressed in THP-1 and M-07e cell lines, which have characteristics of myeloid and early megakaryocytic cells respectively.

Its subcellular location is the nucleus. DNA-binding protein that binds to the 5'GGGAATRCC-3' Ikaros-binding sequence. Transcriptional repressor. Interacts with SPI1 and MITF to repress transcription of the CTSK and ACP5 promoters via recruitment of corepressors SIN3A and CTBP2. May be involved in the development of central and peripheral nervous systems. Essential for the inhibitory function of regulatory T-cells (Treg). Mediates FOXP3-mediated gene silencing in regulatory T-cells (Treg) via recruitment of corepressor CTBP1. This is Zinc finger protein Eos (IKZF4) from Homo sapiens (Human).